The chain runs to 95 residues: Protein FAM240C (95 aa).

The tract at residues 68-95 (KMLQGPGRCPDRVPEATESLHTKDKKAA) is disordered. The span at 76–95 (CPDRVPEATESLHTKDKKAA) shows a compositional bias: basic and acidic residues.

Belongs to the FAM240 family.

This chain is Protein FAM240C (FAM240C), found in Homo sapiens (Human).